A 781-amino-acid chain; its full sequence is N-acetylneuraminate (7)9-O-acetyltransferase (781 aa).

The Cytoplasmic portion of the chain corresponds to 1–15; the sequence is MAVLAYNLGKREINQ. Residues 16-36 traverse the membrane as a helical segment; that stretch reads YFSIKNAKLLAAAAVVLLTVF. Over 37–308 the chain is Lumenal; the sequence is HAASRHYGSS…SAPPLSVLQK (272 aa). Serine 94 functions as the Acyl-ester intermediate in the catalytic mechanism. Asparagine 139, asparagine 185, and asparagine 239 each carry an N-linked (GlcNAc...) asparagine glycan. Catalysis depends on residues aspartate 264 and histidine 267. A helical membrane pass occupies residues 309-329; sequence LAAAVLLVSVVCFVLLGFSSH. Residues 330–350 are disordered; that stretch reads RKSRPAPDVESGEEKKHPAAV. Over 330 to 354 the chain is Cytoplasmic; sequence RKSRPAPDVESGEEKKHPAAVGQLN. The chain crosses the membrane as a helical span at residues 355 to 375; sequence PKGPLLAIGKMSLIMLYFYLC. Residues 376-386 are Lumenal-facing; sequence DRADIFMKEQK. Residues 387 to 407 form a helical membrane-spanning segment; sequence FYTHSAFFIPLIYIFVLGVFY. Over 408 to 430 the chain is Cytoplasmic; that stretch reads SENSKETKLLNREQTDEWKGWMQ. Residues 431 to 451 traverse the membrane as a helical segment; sequence LVILIYHISGASAFIPVYMHV. Position 452 (arginine 452) is a topological domain, lumenal. Residues 453–473 form a helical membrane-spanning segment; sequence VLVAAYLFQTGYGHFSFFWLK. Topologically, residues 474–477 are cytoplasmic; sequence GDFG. Residues 478-498 form a helical membrane-spanning segment; it reads LYRVCQVLFRLNFLVVVLCLV. Residues 499–504 are Lumenal-facing; sequence MDRPYQ. Residues 505–525 form a helical membrane-spanning segment; the sequence is FYYFVPLVTFWFAVIYATMAL. Residues 526–537 lie on the Cytoplasmic side of the membrane; that stretch reads WPQILQKQANGS. The helical transmembrane segment at 538–558 threads the bilayer; the sequence is AFWNLALLLKLLGLLLFIGFF. Over 559–595 the chain is Lumenal; the sequence is AYSQELFEGIFSVWPLSKLFELQGSIHEWWFRWKLDR. A helical transmembrane segment spans residues 596-616; that stretch reads FAVVNGMLFAFIYLLLQKYQL. Residues 617 to 629 lie on the Cytoplasmic side of the membrane; sequence LSEGKGEPLFSNK. Residues 630 to 650 traverse the membrane as a helical segment; the sequence is ISNCLLFVSVVSFMTYSIWAS. Residues 651–660 lie on the Lumenal side of the membrane; it reads GCKNKSECNE. Residue asparagine 654 is glycosylated (N-linked (GlcNAc...) asparagine). The helical transmembrane segment at 661–681 threads the bilayer; that stretch reads MHPYISVILAFILIRNIPGYA. Residues 682–687 lie on the Cytoplasmic side of the membrane; that stretch reads RSLYSS. The helical transmembrane segment at 688 to 708 threads the bilayer; it reads FFAWFGKISLELFICQYHIWL. Over 709-714 the chain is Lumenal; the sequence is AADTKG. The chain crosses the membrane as a helical span at residues 715-735; it reads ILVLIPGNPTLNIIVSTFIFV. Residues 736–756 lie on the Cytoplasmic side of the membrane; the sequence is CVAHEISQITNDLAQVAIPKE. A helical membrane pass occupies residues 757 to 777; the sequence is SGPLLKRLLGAGVFLVLVLTL. The Lumenal segment spans residues 778 to 781; it reads SQKD.

The protein belongs to the PC-esterase family. CASD1 subfamily.

It is found in the golgi apparatus membrane. The catalysed reaction is CMP-N-acetyl-beta-neuraminate + acetyl-CoA = CMP-N-acetyl-9-O-acetyl-beta-neuraminate + CoA. The enzyme catalyses a ganglioside GD3 (d18:1(4E)) + acetyl-CoA = a ganglioside Ac-O-7-GD3(d18:1(4E)) + CoA. It carries out the reaction CMP-N-acetyl-beta-neuraminate + acetyl-CoA = CMP-N-acetyl-7-O-acetyl-beta-neuraminate + CoA. Key enzyme in the biosynthesis of O-acetylated (O-Ac) sialoglycans such as gangliosides O-AcGD3 and O-AcGD2, which affect various processes such as cell-cell interactions, host-pathogen recognition. Catalyzes the transfer of an acetyl group from a donor, the acetyl-coenzyme-A molecule (acetyl-CoA), to the C7/8/9 OH-position of a sialic acid residue. The primary site of O-acetyl group transfer on sialic acid seems to depend on cell type and can be C7, from which the O-acetyl group could subsequently migrate to the C8 and then to the C9 position, or at C9 with possibility of migrating to the C8 and then to the C7 position. Together with ST8SIA1 (GD3 synthase) it increases the levels of ganglioside Ac-O-7-GD3. Can transfer the acetyl group from acetyl-CoA to free sialate (N-acetylneuraminate, Neu5Ac) in vitro, but has preferred substrate specificity for CMP-activated sialate (CMP-Neu5Ac), resulting in the formation of 9-O-acetylated CMP-Neu5Ac (CMP-Neu5,9Ac2). CMP-Neu5,9Ac2 may be used by sialyltransferases as a sialate donor for glycoconjugate acceptors such as ganglioside GD3. O-acetylation at position C9 of ganglioside GD3 can counteract the pro-apoptotic effects of the ganglioside GD3 in tumor cells. In Danio rerio (Zebrafish), this protein is N-acetylneuraminate (7)9-O-acetyltransferase.